A 201-amino-acid polypeptide reads, in one-letter code: Anthranilate synthase component 2 (201 aa).

The Glutamine amidotransferase type-1 domain maps to Lys2 to Ser201. L-glutamine is bound at residue Gly59–Gly61. Cys89 (nucleophile; for GATase activity) is an active-site residue. Residues Gln93 and Ser139–Leu140 each bind L-glutamine. Active-site for GATase activity residues include His182 and Glu184.

Heterotetramer consisting of two non-identical subunits: a beta subunit (TrpG) and a large alpha subunit (TrpE).

The catalysed reaction is chorismate + L-glutamine = anthranilate + pyruvate + L-glutamate + H(+). The protein operates within amino-acid biosynthesis; L-tryptophan biosynthesis; L-tryptophan from chorismate: step 1/5. In terms of biological role, part of a heterotetrameric complex that catalyzes the two-step biosynthesis of anthranilate, an intermediate in the biosynthesis of L-tryptophan. In the first step, the glutamine-binding beta subunit (TrpG) of anthranilate synthase (AS) provides the glutamine amidotransferase activity which generates ammonia as a substrate that, along with chorismate, is used in the second step, catalyzed by the large alpha subunit of AS (TrpE) to produce anthranilate. In the absence of TrpG, TrpE can synthesize anthranilate directly from chorismate and high concentrations of ammonia. This chain is Anthranilate synthase component 2 (trpG), found in Leptospira biflexa.